The following is a 2032-amino-acid chain: Cytoskeleton-associated protein 5 (2032 aa).

TOG regions lie at residues 1–223 (MGDD…KLPT) and 268–502 (YELL…LIHG). Position 48 is an N6-acetyllysine (Lys48). 3 HEAT repeats span residues 159–197 (IILL…WIRD), 356–394 (GQYA…TTTL), and 434–472 (KSLL…VVGE). The tract at residues 516–579 (PLPGRTAASG…GTKNKKGLET (64 aa)) is disordered. Residues 543 to 554 (LKKAPAAKAGGP) show a composition bias toward low complexity. Residues 588–817 (SIEVCEEKAS…EFEKMQGQSP (230 aa)) form a TOG 3 region. The HEAT 4 repeat unit spans residues 750–788 (GLNVKAFISNVKTALAATNPAVRTAAITLLGVMYLYVGP). The tract at residues 811 to 851 (KMQGQSPPAPTRGISKHSTSGTDEGEDGDEPDDGSNDVVDL) is disordered. Phosphoserine is present on residues Ser816 and Ser845. Positions 833-845 (DEGEDGDEPDDGS) are enriched in acidic residues. TOG stretches follow at residues 853 to 1081 (PRTE…VNMP) and 1193 to 1428 (IEQL…KRPS). HEAT repeat units lie at residues 855–893 (TEIS…DAKF), 936–974 (KQHV…QTGM), and 1013–1051 (PTDL…HLGY). The interval 1077–1160 (KVNMPAKPAP…KEDEDKSGPI (84 aa)) is disordered. HEAT repeat units follow at residues 1284–1322 (ENEA…VYPA), 1324–1357 (KMFP…SYGM), and 1361–1399 (QPTP…VHGD). The tract at residues 1422–1443 (RSAKRPSAAPIKQVEEKPQRAQ) is disordered. Ser1469 carries the phosphoserine modification. Positions 1801–1822 (SMDQTGSKSDKETEKGASRIDE) are disordered. Residues 1808–1822 (KSDKETEKGASRIDE) show a composition bias toward basic and acidic residues. Ser1861 bears the Phosphoserine mark. The segment at 1932-1957 (PSVYLERLKILRQRCGLDNTKQDDRP) is interaction with TACC3. The disordered stretch occupies residues 1949 to 2032 (DNTKQDDRPP…RLERIKSSRK (84 aa)). A compositionally biased stretch (polar residues) spans 1971-1983 (VASSTDMLHSKLS). Over residues 1984–1997 (QLRESREQHQHSDL) the composition is skewed to basic and acidic residues. Residues 2002-2014 (THSSGTVTSSSST) show a composition bias toward low complexity. Residues 2018 to 2032 (DDLKKRLERIKSSRK) are compositionally biased toward basic and acidic residues.

Belongs to the TOG/XMAP215 family. In terms of assembly, interacts with TACC1. Interacts with SLAIN2 and SLAIN1. Interacts with HNRNPA2B1. Interacts with TACC3 independently of clathrin. Interacts with TACC3 and clathrin forming the TACC3/ch-TOG/clathrin complex located at spindle inter-microtubules bridges. Interacts with NDC80; indicative for an association with the NDC80 complex. In terms of tissue distribution, overexpressed in hepatomas and colonic tumors. Also expressed in skeletal muscle, brain, heart, placenta, lung, liver, kidney and pancreas. Expression is elevated in the brain; highly expressed in the Purkinje cell bodies of the cerebellum.

It localises to the cytoplasm. The protein localises to the cytoskeleton. Its subcellular location is the microtubule organizing center. It is found in the centrosome. The protein resides in the spindle pole. It localises to the spindle. The protein localises to the chromosome. Its subcellular location is the centromere. It is found in the kinetochore. Functionally, binds to the plus end of microtubules and regulates microtubule dynamics and microtubule organization. Acts as a processive microtubule polymerase. Promotes cytoplasmic microtubule nucleation and elongation. Plays a major role in organizing spindle poles. In spindle formation protects kinetochore microtubules from depolymerization by KIF2C and has an essential role in centrosomal microtubule assembly independently of KIF2C activity. Contributes to centrosome integrity. Acts as a component of the TACC3/ch-TOG/clathrin complex proposed to contribute to stabilization of kinetochore fibers of the mitotic spindle by acting as inter-microtubule bridge. The TACC3/ch-TOG/clathrin complex is required for the maintenance of kinetochore fiber tension. Enhances the strength of NDC80 complex-mediated kinetochore-tip microtubule attachments. The protein is Cytoskeleton-associated protein 5 (CKAP5) of Homo sapiens (Human).